The chain runs to 316 residues: UPF0761 membrane protein PM1616 (316 aa).

6 helical membrane passes run 36-56, 92-112, 128-148, 172-192, 204-224, and 236-256; these read MLALVPLVMVVFSVFSAFPVF, QMSAVGVISLVVVALMLINSI, LVFSFAIYWLILTLGPLLIGA, ILSFVPFFLTWLIFTLIYTVV, IGALVAAVFFTLGKQAFLWYV, and AMATLPIMLLWIQLSWVVILI.

It belongs to the UPF0761 family.

It is found in the cell inner membrane. This chain is UPF0761 membrane protein PM1616, found in Pasteurella multocida (strain Pm70).